A 426-amino-acid polypeptide reads, in one-letter code: Histidine--tRNA ligase (426 aa).

The protein belongs to the class-II aminoacyl-tRNA synthetase family. In terms of assembly, homodimer.

Its subcellular location is the cytoplasm. The enzyme catalyses tRNA(His) + L-histidine + ATP = L-histidyl-tRNA(His) + AMP + diphosphate + H(+). In Streptococcus pyogenes serotype M5 (strain Manfredo), this protein is Histidine--tRNA ligase.